Here is a 435-residue protein sequence, read N- to C-terminus: MNIERADFVDRVKIFVKAGDGGNGCVSFRREKYVPKGGPDGGDGGDGGFVFLRANPSVSTLIEFVNKRKFVAENGKHGMGKKMKGRNGKDLFIDVPVGTVVKDAVTGEIIADLNEPGKIVCVARGGKGGRGNAHFATSTKQAPLIAERGEKGESRWLELELKILADVGLVGYPNVGKSSLISRISNARPKIANYPFTTLIPNLGVVKYDDFSFVVADIPGLIEGASEGVGLGNVFLRHVERCYLIAHVIDVSGYEREDPVRDYFVIREEMKKYSPFLLEKPEIVVANKIDLIGKEELEKILKRLRDATNREVIPVSALTGEGIDLLVSKLASIVREMKVEKSERKEEKFVKPSPVWRRLPEKFHLEVVKEDEGYWVVEGENLRVWIERFDLNQRDARLMLLQVLEKNGLNNKLKEAGVKEGDVVRIGDFEFEYRE.

The Obg domain maps to 6 to 164; that stretch reads ADFVDRVKIF…RWLELELKIL (159 aa). An OBG-type G domain is found at 165–335; it reads ADVGLVGYPN…LVSKLASIVR (171 aa). GTP-binding positions include 171–178, 196–200, 217–220, 287–290, and 316–318; these read GYPNVGKS, FTTLI, DIPG, NKID, and SAL. Mg(2+) is bound by residues S178 and T198. The region spanning 357-435 is the OCT domain; it reads RRLPEKFHLE…IGDFEFEYRE (79 aa).

It belongs to the TRAFAC class OBG-HflX-like GTPase superfamily. OBG GTPase family. In terms of assembly, monomer. Mg(2+) is required as a cofactor.

It is found in the cytoplasm. An essential GTPase which binds GTP, GDP and possibly (p)ppGpp with moderate affinity, with high nucleotide exchange rates and a fairly low GTP hydrolysis rate. Plays a role in control of the cell cycle, stress response, ribosome biogenesis and in those bacteria that undergo differentiation, in morphogenesis control. The protein is GTPase Obg of Thermotoga sp. (strain RQ2).